Here is a 208-residue protein sequence, read N- to C-terminus: LexA repressor (208 aa).

Positions Arg-28–Lys-48 form a DNA-binding region, H-T-H motif. Active-site for autocatalytic cleavage activity residues include Ser-125 and Lys-162.

The protein belongs to the peptidase S24 family. As to quaternary structure, homodimer.

The catalysed reaction is Hydrolysis of Ala-|-Gly bond in repressor LexA.. Represses a number of genes involved in the response to DNA damage (SOS response), including recA and lexA. In the presence of single-stranded DNA, RecA interacts with LexA causing an autocatalytic cleavage which disrupts the DNA-binding part of LexA, leading to derepression of the SOS regulon and eventually DNA repair. This Aliivibrio fischeri (strain ATCC 700601 / ES114) (Vibrio fischeri) protein is LexA repressor.